Reading from the N-terminus, the 355-residue chain is Protein-glutamate methylesterase/protein-glutamine glutaminase (355 aa).

Residues 3 to 121 (NVLVVEDSPV…HPDHEATARK (119 aa)) enclose the Response regulatory domain. A 4-aspartylphosphate modification is found at Asp-54. The 195-residue stretch at 154–348 (PLLNRVAPAR…AALTNLVAER (195 aa)) folds into the CheB-type methylesterase domain. Active-site residues include Ser-170, His-197, and Asp-290.

This sequence belongs to the CheB family. Post-translationally, phosphorylated by CheA. Phosphorylation of the N-terminal regulatory domain activates the methylesterase activity.

It is found in the cytoplasm. It carries out the reaction [protein]-L-glutamate 5-O-methyl ester + H2O = L-glutamyl-[protein] + methanol + H(+). The catalysed reaction is L-glutaminyl-[protein] + H2O = L-glutamyl-[protein] + NH4(+). In terms of biological role, involved in chemotaxis. Part of a chemotaxis signal transduction system that modulates chemotaxis in response to various stimuli. Catalyzes the demethylation of specific methylglutamate residues introduced into the chemoreceptors (methyl-accepting chemotaxis proteins or MCP) by CheR. Also mediates the irreversible deamidation of specific glutamine residues to glutamic acid. This Nitrosospira multiformis (strain ATCC 25196 / NCIMB 11849 / C 71) protein is Protein-glutamate methylesterase/protein-glutamine glutaminase.